We begin with the raw amino-acid sequence, 108 residues long: MAGSQAQWRPPRSCDIYCSELKHCKSLRNRFHEYYTYGRAPDCQQWKQDYQNCKDWEKNHSTQAKDSLQESERKRLADQRKFTPVWELRQKPPSDWHLPLNQGEPQDP.

A disordered region spans residues 58–108 (KNHSTQAKDSLQESERKRLADQRKFTPVWELRQKPPSDWHLPLNQGEPQDP). The segment covering 67–81 (SLQESERKRLADQRK) has biased composition (basic and acidic residues).

This sequence belongs to the UPF0545 family. Post-translationally, rapidly degraded by proteolysis following neuronal stimulation, resulting in increased AMPA receptor clustering.

The protein resides in the synapse. It localises to the synaptic cleft. In terms of biological role, negatively regulates long-term potentiation and modulates adult synaptic plasticity. The sequence is that of Synaptic plasticity regulator PANTS from Danio rerio (Zebrafish).